A 438-amino-acid chain; its full sequence is Ornithine aminotransferase car2 (438 aa).

Lys-275 is subject to N6-(pyridoxal phosphate)lysine.

This sequence belongs to the class-III pyridoxal-phosphate-dependent aminotransferase family. Pyridoxal 5'-phosphate is required as a cofactor.

It is found in the cytoplasm. The protein localises to the nucleus. The enzyme catalyses a 2-oxocarboxylate + L-ornithine = L-glutamate 5-semialdehyde + an L-alpha-amino acid. It participates in amino-acid biosynthesis; L-proline biosynthesis; L-glutamate 5-semialdehyde from L-ornithine: step 1/1. This Schizosaccharomyces pombe (strain 972 / ATCC 24843) (Fission yeast) protein is Ornithine aminotransferase car2 (car2).